We begin with the raw amino-acid sequence, 551 residues long: Methionine--tRNA ligase (551 aa).

The 'HIGH' region motif lies at 12–22; that stretch reads PYANGPLHFGH. Residues Cys144, Cys147, Cys157, and Cys160 each coordinate Zn(2+). A 'KMSKS' region motif is present at residues 330–334; the sequence is QFSKS. Residue Lys333 coordinates ATP.

This sequence belongs to the class-I aminoacyl-tRNA synthetase family. MetG type 1 subfamily. In terms of assembly, monomer. Requires Zn(2+) as cofactor.

The protein localises to the cytoplasm. The enzyme catalyses tRNA(Met) + L-methionine + ATP = L-methionyl-tRNA(Met) + AMP + diphosphate. Its function is as follows. Is required not only for elongation of protein synthesis but also for the initiation of all mRNA translation through initiator tRNA(fMet) aminoacylation. This is Methionine--tRNA ligase from Chlamydia abortus (strain DSM 27085 / S26/3) (Chlamydophila abortus).